A 432-amino-acid chain; its full sequence is SVP1-like protein 2 (432 aa).

WD repeat units follow at residues 223 to 263 and 268 to 307; these read AHKS…LLYE and LDRA…TSSG.

Belongs to the WD repeat PROPPIN family.

The protein localises to the vacuole membrane. Its subcellular location is the cytoplasmic vesicle membrane. Its function is as follows. Involved in mitochondrial or peroxisomal functions and amino acid signaling pathways. In Debaryomyces hansenii (strain ATCC 36239 / CBS 767 / BCRC 21394 / JCM 1990 / NBRC 0083 / IGC 2968) (Yeast), this protein is SVP1-like protein 2 (HSV2).